The chain runs to 346 residues: Phosphoribosylformylglycinamidine cyclo-ligase (346 aa).

Belongs to the AIR synthase family.

Its subcellular location is the cytoplasm. The enzyme catalyses 2-formamido-N(1)-(5-O-phospho-beta-D-ribosyl)acetamidine + ATP = 5-amino-1-(5-phospho-beta-D-ribosyl)imidazole + ADP + phosphate + H(+). It functions in the pathway purine metabolism; IMP biosynthesis via de novo pathway; 5-amino-1-(5-phospho-D-ribosyl)imidazole from N(2)-formyl-N(1)-(5-phospho-D-ribosyl)glycinamide: step 2/2. This Bacillus cereus (strain ATCC 10987 / NRS 248) protein is Phosphoribosylformylglycinamidine cyclo-ligase.